The chain runs to 456 residues: MASCDEVRQLKKEHTRSLTMCGHVGFESLPDQLVDRSIEQGFCFNILCVGETGIGKSTLINTLFNTNFEELESSHFCPCVRLRAQTYELQESNVRLKLTIVNTVGFGDQINKEESYQPIVDYIDNQFEAYLQEELKIKRALFNYHDSRIHVCLYFIAPTGHSLRTLDLLTMKSLDNKVNIIPLIAKADTISKSELQKFKMKLMSELVINGVQIYQFPTDDDTTAKINGAMNGHLPFAVVGSMDEIKVGNKMVKARQYPWGIVQVENENHCDFVKLREMLICTNMEDLREQTHMRHYELYRRCKLQEMGFIDIGPENKPLSLQETYEAKRHEFCGERQRKEEQMKQMFVQRVKEKEAILKEAERELQAKFEHLKRIHQEERMKLEEKRRMLEEESVAFAKKKATCELFPHQSFLASGSSIRRDKDRKKTDGASAFCDCITAQENVRLCISSQRKEMD.

Residues 40–306 (QGFCFNILCV…ELYRRCKLQE (267 aa)) enclose the Septin-type G domain. The interval 50 to 57 (GETGIGKS) is G1 motif. GTP contacts are provided by residues 50–57 (GETGIGKS), Gly105, 186–194 (KADTISKSE), Gly240, and Arg255. The G3 motif stretch occupies residues 102-105 (NTVG). Residues 185-188 (AKAD) are G4 motif. A Phosphoserine modification is found at Ser418.

This sequence belongs to the TRAFAC class TrmE-Era-EngA-EngB-Septin-like GTPase superfamily. Septin GTPase family. Septins polymerize into heterooligomeric protein complexes that form filaments, and can associate with cellular membranes, actin filaments and microtubules. GTPase activity is required for filament formation. Interacts with ADGB. Proteolytically cleaved in vitro in a calmodulin-dependent manner.

It is found in the cytoplasm. The protein resides in the cytoskeleton. The protein localises to the cell projection. Its subcellular location is the cilium. It localises to the flagellum. In terms of biological role, filament-forming cytoskeletal GTPase. May play a role in cytokinesis (Potential). The protein is Septin-10 of Rattus norvegicus (Rat).